Consider the following 280-residue polypeptide: NAD kinase (280 aa).

The active-site Proton acceptor is the aspartate 60. NAD(+)-binding positions include 60–61 (DG), 134–135 (ND), arginine 145, aspartate 164, 175–180 (TAYSLS), and glutamine 234.

It belongs to the NAD kinase family. A divalent metal cation is required as a cofactor.

It localises to the cytoplasm. The enzyme catalyses NAD(+) + ATP = ADP + NADP(+) + H(+). Its function is as follows. Involved in the regulation of the intracellular balance of NAD and NADP, and is a key enzyme in the biosynthesis of NADP. Catalyzes specifically the phosphorylation on 2'-hydroxyl of the adenosine moiety of NAD to yield NADP. This is NAD kinase from Carboxydothermus hydrogenoformans (strain ATCC BAA-161 / DSM 6008 / Z-2901).